The sequence spans 144 residues: Transcriptional regulator MraZ (144 aa).

SpoVT-AbrB domains follow at residues threonine 5–glutamine 50 and alanine 81–alanine 124.

It belongs to the MraZ family. Forms oligomers.

It localises to the cytoplasm. The protein resides in the nucleoid. The polypeptide is Transcriptional regulator MraZ (Anaeromyxobacter dehalogenans (strain 2CP-C)).